The following is a 208-amino-acid chain: uncharacterized protein (208 aa).

The span at 118–134 (QYPNQYQQQPQQQQPGY) shows a compositional bias: low complexity. The tract at residues 118 to 208 (QYPNQYQQQP…HKKEKNEIKE (91 aa)) is disordered. The span at 138–175 (NYNQPPVQLNKQAYDNYQQNDYKSNNQPNLAKENNISN) shows a compositional bias: polar residues. Over residues 187 to 201 (KKEKKHSFFSKLHKK) the composition is skewed to basic residues.

This is an uncharacterized protein from Dictyostelium discoideum (Social amoeba).